Here is a 286-residue protein sequence, read N- to C-terminus: CDP-diacylglycerol--serine O-phosphatidyltransferase (286 aa).

6 consecutive transmembrane segments (helical) span residues 15–35 (ILPSAMTVLSICAGLTAIKFA), 74–94 (IDSLADAVNFGVTPALVLYVS), 95–115 (MLSKWPVGWVVVLLYAVCVVL), 135–155 (EFFVGMPAPAGAVSMIGLLAL), 167–187 (GWFLSFWVTGTSILLVSGIPM), and 207–227 (LAICAAAAVLAPYLLIWVIII).

This sequence belongs to the CDP-alcohol phosphatidyltransferase class-I family.

It localises to the cell membrane. The catalysed reaction is a CDP-1,2-diacyl-sn-glycerol + L-serine = a 1,2-diacyl-sn-glycero-3-phospho-L-serine + CMP + H(+). The sequence is that of CDP-diacylglycerol--serine O-phosphatidyltransferase (pssA) from Mycobacterium tuberculosis (strain ATCC 25618 / H37Rv).